The following is a 221-amino-acid chain: Toxin coregulated pilus biosynthesis protein P (221 aa).

The ompR/PhoB-type DNA-binding region spans arginine 5 to isoleucine 109. A helical transmembrane segment spans residues valine 143–serine 163.

The protein resides in the cell membrane. Its function is as follows. Involved in TCP pilus biogenesis. The protein is Toxin coregulated pilus biosynthesis protein P (tcpP) of Vibrio cholerae serotype O1 (strain ATCC 39315 / El Tor Inaba N16961).